A 197-amino-acid chain; its full sequence is 3-isopropylmalate dehydratase small subunit (197 aa).

It belongs to the LeuD family. LeuD type 1 subfamily. As to quaternary structure, heterodimer of LeuC and LeuD.

The catalysed reaction is (2R,3S)-3-isopropylmalate = (2S)-2-isopropylmalate. Its pathway is amino-acid biosynthesis; L-leucine biosynthesis; L-leucine from 3-methyl-2-oxobutanoate: step 2/4. In terms of biological role, catalyzes the isomerization between 2-isopropylmalate and 3-isopropylmalate, via the formation of 2-isopropylmaleate. This Mycolicibacterium vanbaalenii (strain DSM 7251 / JCM 13017 / BCRC 16820 / KCTC 9966 / NRRL B-24157 / PYR-1) (Mycobacterium vanbaalenii) protein is 3-isopropylmalate dehydratase small subunit.